A 263-amino-acid chain; its full sequence is Ribosomal RNA small subunit methyltransferase J (263 aa).

Residues 115–116 (RD), 131–132 (ER), and Asp181 contribute to the S-adenosyl-L-methionine site.

This sequence belongs to the methyltransferase superfamily. RsmJ family.

The protein resides in the cytoplasm. The catalysed reaction is guanosine(1516) in 16S rRNA + S-adenosyl-L-methionine = N(2)-methylguanosine(1516) in 16S rRNA + S-adenosyl-L-homocysteine + H(+). Functionally, specifically methylates the guanosine in position 1516 of 16S rRNA. The sequence is that of Ribosomal RNA small subunit methyltransferase J from Hahella chejuensis (strain KCTC 2396).